Consider the following 510-residue polypeptide: Maturase K (510 aa).

The protein belongs to the intron maturase 2 family. MatK subfamily.

The protein resides in the plastid. The protein localises to the chloroplast. Its function is as follows. Usually encoded in the trnK tRNA gene intron. Probably assists in splicing its own and other chloroplast group II introns. The sequence is that of Maturase K from Taxus cuspidata (Japanese yew).